Reading from the N-terminus, the 154-residue chain is 3-dehydroquinate dehydratase (154 aa).

Tyrosine 22 functions as the Proton acceptor in the catalytic mechanism. Asparagine 73, histidine 79, and aspartate 86 together coordinate substrate. The active-site Proton donor is the histidine 99. Residues 100–101 (LS) and arginine 110 contribute to the substrate site.

It belongs to the type-II 3-dehydroquinase family. As to quaternary structure, homododecamer.

The enzyme catalyses 3-dehydroquinate = 3-dehydroshikimate + H2O. Its pathway is metabolic intermediate biosynthesis; chorismate biosynthesis; chorismate from D-erythrose 4-phosphate and phosphoenolpyruvate: step 3/7. Its function is as follows. Catalyzes a trans-dehydration via an enolate intermediate. This is 3-dehydroquinate dehydratase from Carboxydothermus hydrogenoformans (strain ATCC BAA-161 / DSM 6008 / Z-2901).